The sequence spans 139 residues: ATP synthase epsilon chain (139 aa).

Belongs to the ATPase epsilon chain family. In terms of assembly, F-type ATPases have 2 components, CF(1) - the catalytic core - and CF(0) - the membrane proton channel. CF(1) has five subunits: alpha(3), beta(3), gamma(1), delta(1), epsilon(1). CF(0) has three main subunits: a, b and c.

Its subcellular location is the cell inner membrane. In terms of biological role, produces ATP from ADP in the presence of a proton gradient across the membrane. The protein is ATP synthase epsilon chain of Pseudomonas putida (strain ATCC 47054 / DSM 6125 / CFBP 8728 / NCIMB 11950 / KT2440).